Reading from the N-terminus, the 251-residue chain is 3-deoxy-manno-octulosonate cytidylyltransferase (251 aa).

Belongs to the KdsB family.

It localises to the cytoplasm. It carries out the reaction 3-deoxy-alpha-D-manno-oct-2-ulosonate + CTP = CMP-3-deoxy-beta-D-manno-octulosonate + diphosphate. The protein operates within nucleotide-sugar biosynthesis; CMP-3-deoxy-D-manno-octulosonate biosynthesis; CMP-3-deoxy-D-manno-octulosonate from 3-deoxy-D-manno-octulosonate and CTP: step 1/1. It participates in bacterial outer membrane biogenesis; lipopolysaccharide biosynthesis. In terms of biological role, activates KDO (a required 8-carbon sugar) for incorporation into bacterial lipopolysaccharide in Gram-negative bacteria. The sequence is that of 3-deoxy-manno-octulosonate cytidylyltransferase from Rhizobium etli (strain ATCC 51251 / DSM 11541 / JCM 21823 / NBRC 15573 / CFN 42).